A 473-amino-acid chain; its full sequence is Mogroside IIIx synthase (473 aa).

The Proton acceptor role is filled by His-21. The active-site Charge relay is the Asp-123. Thr-274, Gln-337, Trp-355, Asn-356, Ser-357, Glu-360, Asp-376, and Gln-377 together coordinate UDP-alpha-D-glucose.

It belongs to the UDP-glycosyltransferase family. In terms of tissue distribution, highly expressed in mature fruits.

The catalysed reaction is mogroside IIE + UDP-alpha-D-glucose = mogroside IIIX + UDP + H(+). It carries out the reaction mogroside III + UDP-alpha-D-glucose = siamenoside I + UDP + H(+). Its pathway is secondary metabolite biosynthesis; terpenoid biosynthesis. UDP-glycosyltransferase involved in the biosynthesis of cucurbitacin and mogroside tetracyclic triterpene natural products (e.g. siamenoside I and mogrosides IV, V and VI). Cucurbitacins have cytotoxic properties and exhibit deterrent taste as a defense barrier against herbivores. Mogrosides are nonsugar highly oxygenated compounds used as high-intensity zero-calorie sweeteners; they also possess pharmacological properties such as regulating immunity, lowering blood sugar and lipid levels, protecting the liver, and acting as antioxidants and antitumor agents. Catalyzes the branched glucosylations of mogroside II-E and mogroside III. The sequence is that of Mogroside IIIx synthase from Siraitia grosvenorii (Monk's fruit).